The sequence spans 128 residues: MTTSSYFLLVALGLLLYVCRSSFGSEHTCESDASPHPQGVCGSPLAEAVEAACELEESLQGGTGKKRGRASLLRKRRAFLSMLKARAKRNEASPLQRSGRGIVCECCKNHCNIEELTEYCPPVTEGSG.

Residues 1–24 (MTTSSYFLLVALGLLLYVCRSSFG) form the signal peptide. 4 disulfides stabilise this stretch: C29-C104, C41-C107, C53-C120, and C106-C111. Residues 59-89 (LQGGTGKKRGRASLLRKRRAFLSMLKARAKR) constitute a propeptide, c peptide. The residue at position 115 (E115) is a 4-carboxyglutamate; partial. S127 carries the post-translational modification Serine amide.

Belongs to the insulin family. Heterodimer of A and B chains; disulfide-linked. Expressed by the venom gland.

It is found in the secreted. In terms of biological role, this venom insulin facilitates prey capture by rapidly inducing hypoglycemic shock. Intraperitoneal injection of this peptide into zebrafish lowers blood glucose with the same potency than human insulin. In vivo, when applied to water, this peptide reduces overall locomotor activity of zebrafish larvae, observed as a significant decrease in the percentage of time spent swimming and movement frequency. This is Con-Ins F2 from Conus floridulus (Cone snail).